A 205-amino-acid chain; its full sequence is Large ribosomal subunit protein uL4 (205 aa).

Positions 43–78 (ARAGTKAQKTRSEVAGGGKKPWRQKGTGNARAGTIR) are disordered.

This sequence belongs to the universal ribosomal protein uL4 family. In terms of assembly, part of the 50S ribosomal subunit.

In terms of biological role, one of the primary rRNA binding proteins, this protein initially binds near the 5'-end of the 23S rRNA. It is important during the early stages of 50S assembly. It makes multiple contacts with different domains of the 23S rRNA in the assembled 50S subunit and ribosome. Forms part of the polypeptide exit tunnel. The sequence is that of Large ribosomal subunit protein uL4 from Halorhodospira halophila (strain DSM 244 / SL1) (Ectothiorhodospira halophila (strain DSM 244 / SL1)).